We begin with the raw amino-acid sequence, 332 residues long: Torsin-1A (332 aa).

The signal sequence occupies residues 1-20 (MKLGRAALGLLLLAPSVVQA). Residues 91–251 (KPKKPLTLSL…VSVFNNKNSG (161 aa)) are interaction with SNAPIN. ATP is bound at residue 102-109 (GWTGTGKN). Residues Asn-143 and Asn-158 are each glycosylated (N-linked (GlcNAc...) asparagine). The segment at 251 to 332 (GFWHSSLIDR…FTKLDYYYDD (82 aa)) is interaction with KLC1. The segment at 312-332 (RVFSDKGCKTVFTKLDYYYDD) is interaction with SYNE3.

It belongs to the ClpA/ClpB family. Torsin subfamily. Homohexamer. Interacts with TOR1B; the interaction may be specific of neural tissues. Interacts (ATP-bound) with TOR1AIP1 and TOR1AIP2; the interactions induce ATPase activity. Interacts with KLHL14; preferentially when ATP-free. Interacts with KLC1 (via TPR repeats); the interaction associates TOR1A with the kinesin oligomeric complex. Interacts with COPS4; the interaction associates TOR1A with the CSN complex. Interacts with SNAPIN; the interaction is direct and associates SNAPIN with the CSN complex. Interacts with STON2. Interacts (ATP-bound) with SYNE3 (via KASH domain); the interaction is required for SYNE3 nuclear envelope localization. Interacts with VIM; the interaction associates TOR1A with the cytoskeleton. Interacts with PLEC. Interacts (ATP-bound) with SLC6A3; regulates SLC6A3 transport to the plasma membrane. In terms of processing, N-glycosylated.

The protein resides in the endoplasmic reticulum lumen. It is found in the nucleus membrane. It localises to the cell projection. The protein localises to the growth cone. Its subcellular location is the cytoplasmic vesicle membrane. The protein resides in the cytoplasmic vesicle. It is found in the secretory vesicle. It localises to the synaptic vesicle. The protein localises to the cytoplasm. Its subcellular location is the cytoskeleton. It catalyses the reaction ATP + H2O = ADP + phosphate + H(+). Protein with chaperone functions important for the control of protein folding, processing, stability and localization as well as for the reduction of misfolded protein aggregates. Involved in the regulation of synaptic vesicle recycling, controls STON2 protein stability in collaboration with the COP9 signalosome complex (CSN). In the nucleus, may link the cytoskeleton with the nuclear envelope, this mechanism seems to be crucial for the control of nuclear polarity, cell movement and, specifically in neurons, nuclear envelope integrity. Participates in the cellular trafficking and may regulate the subcellular location of multipass membrane proteins such as the dopamine transporter SLC6A3, leading to the modulation of dopamine neurotransmission. In the endoplasmic reticulum, plays a role in the quality control of protein folding by increasing clearance of misfolded proteins such as SGCE variants or holding them in an intermediate state for proper refolding. May have a redundant function with TOR1B in non-neural tissues. The sequence is that of Torsin-1A (TOR1A) from Macaca fascicularis (Crab-eating macaque).